A 496-amino-acid chain; its full sequence is Omega-crystallin (496 aa).

The protein belongs to the aldehyde dehydrogenase family. Lens.

Omega-crystallins are structural components of squids and octopi eye lens. Contains relatively little if any DHAL activity. The chain is Omega-crystallin from Enteroctopus dofleini (North Pacific giant octopus).